Here is a 349-residue protein sequence, read N- to C-terminus: UDP-N-acetylenolpyruvoylglucosamine reductase (349 aa).

Residues 17-187 (VNESADLIIQ…TAITLRLNKQ (171 aa)) enclose the FAD-binding PCMH-type domain. Arg163 is a catalytic residue. Ser233 (proton donor) is an active-site residue. Residue Glu328 is part of the active site.

Belongs to the MurB family. It depends on FAD as a cofactor.

The protein localises to the cytoplasm. It catalyses the reaction UDP-N-acetyl-alpha-D-muramate + NADP(+) = UDP-N-acetyl-3-O-(1-carboxyvinyl)-alpha-D-glucosamine + NADPH + H(+). The protein operates within cell wall biogenesis; peptidoglycan biosynthesis. Cell wall formation. In Aliivibrio fischeri (strain ATCC 700601 / ES114) (Vibrio fischeri), this protein is UDP-N-acetylenolpyruvoylglucosamine reductase.